The sequence spans 197 residues: Ion-translocating oxidoreductase complex subunit B (197 aa).

The hydrophobic stretch occupies residues 1 to 26; the sequence is MSTILIAIIALAVLAAVFGAILGFAS. The 59-residue stretch at 32-90 folds into the 4Fe-4S domain; the sequence is EADPIVDQIDTILPQTQCGQCGYPGCRPYAEAIANGDKINKCPPGGQATIEKLADLMGV. Positions 49, 52, 57, 73, 114, 117, 120, 124, 144, 147, 150, and 154 each coordinate [4Fe-4S] cluster. 2 4Fe-4S ferredoxin-type domains span residues 105 to 134 and 135 to 164; these read TVAF…GGTK and ALHT…MIPV.

Belongs to the 4Fe4S bacterial-type ferredoxin family. RnfB subfamily. The complex is composed of six subunits: RnfA, RnfB, RnfC, RnfD, RnfE and RnfG. The cofactor is [4Fe-4S] cluster.

The protein resides in the cell inner membrane. Functionally, part of a membrane-bound complex that couples electron transfer with translocation of ions across the membrane. The sequence is that of Ion-translocating oxidoreductase complex subunit B from Vibrio atlanticus (strain LGP32) (Vibrio splendidus (strain Mel32)).